The following is a 158-amino-acid chain: L-alanine exporter AlaE (158 aa).

4 helical membrane-spanning segments follow: residues 23 to 43 (FAMVVYCSVVGMMIEIFVSGM), 53 to 73 (LVAIPVNMVIAWPYGLYRDAV), 92 to 112 (VIAYITFQSPVYAAILLFVGA), and 117 to 137 (IITAVSSNIVVSMMMGAAYGY).

The protein belongs to the AlaE exporter family.

It localises to the cell inner membrane. Functionally, exports L-alanine. The sequence is that of L-alanine exporter AlaE from Cronobacter sakazakii (strain ATCC BAA-894) (Enterobacter sakazakii).